Here is a 201-residue protein sequence, read N- to C-terminus: GTP-binding protein ryh1 (201 aa).

18–25 serves as a coordination point for GTP; it reads GEQSVGKT. Residues 40–48 carry the Effector region motif; sequence YQATIGIDF. Residues 66–70 and 124–127 contribute to the GTP site; these read DTAGQ and NKTD. 2 S-geranylgeranyl cysteine lipidation sites follow: Cys-199 and Cys-201. At Cys-201 the chain carries Cysteine methyl ester.

It belongs to the small GTPase superfamily. Rab family.

Its subcellular location is the endosome membrane. The protein resides in the golgi apparatus membrane. It localises to the nucleus. It is found in the cytoplasm. The protein localises to the cytosol. In terms of biological role, has a role in retrograde traffricking of proteins from the endosome to the Golgi. Involved in protein transport to the plasma membrane. Involved in the secretory pathway where it has a role in acid phosphatase secretion. Required also in normal glycosylation trafficking pathways. The protein is GTP-binding protein ryh1 (ryh1) of Schizosaccharomyces pombe (strain 972 / ATCC 24843) (Fission yeast).